The primary structure comprises 201 residues: uncharacterized protein (201 aa).

Residues 11–31 (IWKSLYLLIIVGMLYIGYILI) form a helical membrane-spanning segment.

Its subcellular location is the membrane. This is an uncharacterized protein from Rickettsia prowazekii (strain Madrid E).